We begin with the raw amino-acid sequence, 486 residues long: NADH-quinone oxidoreductase subunit N (486 aa).

Helical transmembrane passes span 14–34 (SIAP…LNFI), 45–65 (MLAI…SGIV), 77–97 (FAFI…PLTL), 105–125 (CSLA…EFMV), 130–150 (LIVI…LIAL), 163–183 (YFTM…IFYL), 203–223 (ILIA…LSLI), 237–257 (SEVM…IVAM), 268–288 (IAFI…LANI), 299–319 (MLAF…VIGT), 326–346 (LFLY…VLWF), 377–397 (FLMA…VFWG), 409–429 (GFIF…YYYL), and 459–479 (FIIT…KFWT).

Belongs to the complex I subunit 2 family. NDH-1 is composed of 14 different subunits. Subunits NuoA, H, J, K, L, M, N constitute the membrane sector of the complex.

It is found in the cell inner membrane. The catalysed reaction is a quinone + NADH + 5 H(+)(in) = a quinol + NAD(+) + 4 H(+)(out). NDH-1 shuttles electrons from NADH, via FMN and iron-sulfur (Fe-S) centers, to quinones in the respiratory chain. The immediate electron acceptor for the enzyme in this species is believed to be ubiquinone. Couples the redox reaction to proton translocation (for every two electrons transferred, four hydrogen ions are translocated across the cytoplasmic membrane), and thus conserves the redox energy in a proton gradient. This chain is NADH-quinone oxidoreductase subunit N, found in Campylobacter hominis (strain ATCC BAA-381 / DSM 21671 / CCUG 45161 / LMG 19568 / NCTC 13146 / CH001A).